Consider the following 113-residue polypeptide: Defense protein 2 (113 aa).

This sequence belongs to the attacin/sarcotoxin-2 family.

The protein localises to the secreted. Has antibacterial activity against both Gram-positive and Gram-negative bacteria. This Lonomia obliqua (Moth) protein is Defense protein 2.